The sequence spans 44 residues: Protein PsbN (44 aa).

Residues 6–26 (FFFSLFVWCLLLSITAYSLYV) traverse the membrane as a helical segment.

The protein belongs to the PsbN family.

It localises to the plastid. The protein resides in the chloroplast thylakoid membrane. May play a role in photosystem I and II biogenesis. This chain is Protein PsbN, found in Tupiella akineta (Green alga).